An 872-amino-acid polypeptide reads, in one-letter code: Alanine--tRNA ligase (872 aa).

4 residues coordinate Zn(2+): histidine 567, histidine 571, cysteine 669, and histidine 673.

It belongs to the class-II aminoacyl-tRNA synthetase family. Zn(2+) serves as cofactor.

The protein localises to the cytoplasm. It carries out the reaction tRNA(Ala) + L-alanine + ATP = L-alanyl-tRNA(Ala) + AMP + diphosphate. Catalyzes the attachment of alanine to tRNA(Ala) in a two-step reaction: alanine is first activated by ATP to form Ala-AMP and then transferred to the acceptor end of tRNA(Ala). Also edits incorrectly charged Ser-tRNA(Ala) and Gly-tRNA(Ala) via its editing domain. The chain is Alanine--tRNA ligase from Streptococcus sanguinis (strain SK36).